A 428-amino-acid chain; its full sequence is Peptidase B (428 aa).

Mn(2+) is bound by residues Lys195 and Asp200. Lys207 is an active-site residue. The Mn(2+) site is built by Asp218, Asp277, and Glu279. The active site involves Arg281.

The protein belongs to the peptidase M17 family. As to quaternary structure, homohexamer. Mn(2+) is required as a cofactor.

It localises to the cytoplasm. It carries out the reaction Release of an N-terminal amino acid, Xaa, from a peptide or arylamide. Xaa is preferably Glu or Asp but may be other amino acids, including Leu, Met, His, Cys and Gln.. Probably plays an important role in intracellular peptide degradation. This is Peptidase B from Cronobacter sakazakii (strain ATCC BAA-894) (Enterobacter sakazakii).